The primary structure comprises 573 residues: DNA damage-binding protein CMR1 (573 aa).

The tract at residues 27–94 is disordered; the sequence is DSLNDSISRE…EMEKAEERKR (68 aa). Residues 72–152 are a coiled coil; it reads TMEDSEEDKQ…EEIKKEEDST (81 aa). Over residues 79-94 the composition is skewed to basic and acidic residues; sequence DKQMREEMEKAEERKR. 7 WD repeats span residues 218–259, 268–308, 319–357, 361–401, 418–456, 495–538, and 542–573; these read ITQQ…DDET, PHGK…STEV, DYPL…KQGE, LHDK…QKNS, HSRL…KLPL, GRWV…LCHL, and DRMT…YLFE.

The protein belongs to the WD repeat DDB2/WDR76 family.

Functionally, DNA-binding protein that binds to both single- and double-stranded DNA. Binds preferentially to UV-damaged DNA. May be involved in DNA-metabolic processes. The chain is DNA damage-binding protein CMR1 from Meyerozyma guilliermondii (strain ATCC 6260 / CBS 566 / DSM 6381 / JCM 1539 / NBRC 10279 / NRRL Y-324) (Yeast).